The primary structure comprises 369 residues: DNA replication and repair protein RecF (369 aa).

An ATP-binding site is contributed by 30–37 (GDNGSGKT).

This sequence belongs to the RecF family.

The protein resides in the cytoplasm. In terms of biological role, the RecF protein is involved in DNA metabolism; it is required for DNA replication and normal SOS inducibility. RecF binds preferentially to single-stranded, linear DNA. It also seems to bind ATP. In Pseudomonas aeruginosa (strain LESB58), this protein is DNA replication and repair protein RecF.